A 325-amino-acid chain; its full sequence is uncharacterized protein (325 aa).

Residues 37–85 form a disordered region; the sequence is EKPTYTPAKPVKKAPSVVQPRRVSRTLRSSESVHTNHGPERVFESPTPA. A Phosphoserine modification is found at serine 52. Over residues 62–71 the composition is skewed to polar residues; that stretch reads TLRSSESVHT. The region spanning 153–311 is the FCP1 homology domain; sequence EDEGKKCLIL…IDLIPFLEHL (159 aa).

This is an uncharacterized protein from Schizosaccharomyces pombe (strain 972 / ATCC 24843) (Fission yeast).